Consider the following 213-residue polypeptide: Orotate phosphoribosyltransferase (213 aa).

Lys-26 contacts 5-phospho-alpha-D-ribose 1-diphosphate. 34–35 (FF) provides a ligand contact to orotate. Residues 72–73 (YK), Arg-99, Lys-100, Lys-103, His-105, and 124–132 (DDVITAGTA) each bind 5-phospho-alpha-D-ribose 1-diphosphate. Residues Thr-128 and Arg-156 each coordinate orotate.

This sequence belongs to the purine/pyrimidine phosphoribosyltransferase family. PyrE subfamily. As to quaternary structure, homodimer. It depends on Mg(2+) as a cofactor.

It carries out the reaction orotidine 5'-phosphate + diphosphate = orotate + 5-phospho-alpha-D-ribose 1-diphosphate. Its pathway is pyrimidine metabolism; UMP biosynthesis via de novo pathway; UMP from orotate: step 1/2. Its function is as follows. Catalyzes the transfer of a ribosyl phosphate group from 5-phosphoribose 1-diphosphate to orotate, leading to the formation of orotidine monophosphate (OMP). The chain is Orotate phosphoribosyltransferase from Salmonella arizonae (strain ATCC BAA-731 / CDC346-86 / RSK2980).